The primary structure comprises 288 residues: uncharacterized protein (288 aa).

A signal peptide spans 1–27 (MKFEFRTLVLISLAVVVVLSGCSQSPS). The interval 144–167 (GESGEAGGAGEQLPASDQASGEEP) is disordered.

This is an uncharacterized protein from Archaeoglobus fulgidus (strain ATCC 49558 / DSM 4304 / JCM 9628 / NBRC 100126 / VC-16).